The chain runs to 95 residues: Co-chaperonin GroES (95 aa).

It belongs to the GroES chaperonin family. Heptamer of 7 subunits arranged in a ring. Interacts with the chaperonin GroEL.

The protein resides in the cytoplasm. Functionally, together with the chaperonin GroEL, plays an essential role in assisting protein folding. The GroEL-GroES system forms a nano-cage that allows encapsulation of the non-native substrate proteins and provides a physical environment optimized to promote and accelerate protein folding. GroES binds to the apical surface of the GroEL ring, thereby capping the opening of the GroEL channel. The chain is Co-chaperonin GroES from Rickettsia felis (strain ATCC VR-1525 / URRWXCal2) (Rickettsia azadi).